Here is a 426-residue protein sequence, read N- to C-terminus: D-tagatose-1,6-bisphosphate aldolase subunit KbaZ (426 aa).

Belongs to the GatZ/KbaZ family. KbaZ subfamily. As to quaternary structure, forms a complex with KbaY.

It participates in carbohydrate metabolism; D-tagatose 6-phosphate degradation; D-glyceraldehyde 3-phosphate and glycerone phosphate from D-tagatose 6-phosphate: step 2/2. Component of the tagatose-1,6-bisphosphate aldolase KbaYZ that is required for full activity and stability of the Y subunit. Could have a chaperone-like function for the proper and stable folding of KbaY. When expressed alone, KbaZ does not show any aldolase activity. This Escherichia coli (strain SMS-3-5 / SECEC) protein is D-tagatose-1,6-bisphosphate aldolase subunit KbaZ.